The chain runs to 156 residues: Small ribosomal subunit protein uS7 (156 aa).

This sequence belongs to the universal ribosomal protein uS7 family. As to quaternary structure, part of the 30S ribosomal subunit. Contacts proteins S9 and S11.

Its function is as follows. One of the primary rRNA binding proteins, it binds directly to 16S rRNA where it nucleates assembly of the head domain of the 30S subunit. Is located at the subunit interface close to the decoding center, probably blocks exit of the E-site tRNA. The sequence is that of Small ribosomal subunit protein uS7 from Rhodospirillum rubrum (strain ATCC 11170 / ATH 1.1.1 / DSM 467 / LMG 4362 / NCIMB 8255 / S1).